A 295-amino-acid chain; its full sequence is Aspartate carbamoyltransferase catalytic subunit (295 aa).

Arg-49 and Thr-50 together coordinate carbamoyl phosphate. Lys-77 is a binding site for L-aspartate. Carbamoyl phosphate contacts are provided by Arg-99, His-127, and Gln-130. L-aspartate is bound by residues Arg-161 and Arg-212. 2 residues coordinate carbamoyl phosphate: Gly-251 and Pro-252.

It belongs to the aspartate/ornithine carbamoyltransferase superfamily. ATCase family. In terms of assembly, heterododecamer (2C3:3R2) of six catalytic PyrB chains organized as two trimers (C3), and six regulatory PyrI chains organized as three dimers (R2).

It catalyses the reaction carbamoyl phosphate + L-aspartate = N-carbamoyl-L-aspartate + phosphate + H(+). It functions in the pathway pyrimidine metabolism; UMP biosynthesis via de novo pathway; (S)-dihydroorotate from bicarbonate: step 2/3. Functionally, catalyzes the condensation of carbamoyl phosphate and aspartate to form carbamoyl aspartate and inorganic phosphate, the committed step in the de novo pyrimidine nucleotide biosynthesis pathway. This chain is Aspartate carbamoyltransferase catalytic subunit, found in Campylobacter jejuni subsp. jejuni serotype O:6 (strain 81116 / NCTC 11828).